The sequence spans 395 residues: WW domain-containing transcription regulator protein 1 (395 aa).

A Glycyl lysine isopeptide (Lys-Gly) (interchain with G-Cter in ubiquitin) cross-link involves residue K46. A disordered region spans residues F52–Q116. Residues H61–S70 are compositionally biased toward polar residues. Residue S62 is modified to Phosphoserine. Phosphoserine; by LATS2 is present on S89. The 34-residue stretch at L124–K157 folds into the WW domain. The segment at P221–L395 is required for interaction with PALS1. A coiled-coil region spans residues L224–A258. Over residues P277 to P293 the composition is skewed to polar residues. The tract at residues P277 to D308 is disordered. Residue S290 is modified to Phosphoserine. S306 carries the phosphoserine; by LATS2 modification. Residues E389–L395 carry the PDZ-binding motif.

Binds to SLC9A3R2 via the PDZ motif at the plasma membrane. Binds to YWHAZ in vivo and in vitro through the phosphoserine-binding motif RSHSSP. Interacts (via coiled-coil domain) with SMAD2 (via MH1 domain), SMAD3 and SMAD4. Interacts with MED15. Interacts with PAX8 and NKX2-1. Interacts with TEAD1, TEAD2, TEAD3 and TEAD4. Interacts (via WW domain) with PALS1. Interacts with LATS1. Interacts with YAP1 (when phosphorylated at 'Ser-112'). Interacts (via WW domain) with PRRG4 (via cytoplasmic domain). Interacts (via WW domain) with AMOTL2 (via PPXY motif); the interaction promotes WWTR1/TAZ localization to the cytoplasm and tight junctions, thereby inhibiting its transcriptional coactivator properties. Interacts (via WW domain) with AMOT; the interaction facilitates translocation of WWTR1/TAZ to the cytoplasm. In terms of processing, phosphorylated by LATS2 and STK3/MST2. Phosphorylation by LATS2 results in creation of 14-3-3 binding sites, retention in the cytoplasm, and functional inactivation. Phosphorylation results in the inhibition of transcriptional coactivation through YWHAZ-mediated nuclear export. Post-translationally, ubiquitinated at Lys-46; leading to proteasomal degradation. Deubiquitinated and stabilized by UCHL1 at Lys-46; leading to inhibition of osteoclastogenesis. As to expression, highly expressed in kidney, heart, placenta and lung.

The protein localises to the nucleus. Its subcellular location is the cytoplasm. It localises to the cell membrane. It is found in the cell junction. The protein resides in the tight junction. In terms of biological role, transcriptional coactivator which acts as a downstream regulatory target in the Hippo signaling pathway that plays a pivotal role in organ size control and tumor suppression by restricting proliferation and promoting apoptosis. The core of this pathway is composed of a kinase cascade wherein STK3/MST2 and STK4/MST1, in complex with its regulatory protein SAV1, phosphorylates and activates LATS1/2 in complex with its regulatory protein MOB1, which in turn phosphorylates and inactivates YAP1 oncoprotein and WWTR1/TAZ. WWTR1 enhances PAX8 and NKX2-1/TTF1-dependent gene activation. In conjunction with YAP1, involved in the regulation of TGFB1-dependent SMAD2 and SMAD3 nuclear accumulation. Plays a key role in coupling SMADs to the transcriptional machinery such as the mediator complex. Regulates embryonic stem-cell self-renewal, promotes cell proliferation and epithelial-mesenchymal transition. The chain is WW domain-containing transcription regulator protein 1 from Mus musculus (Mouse).